Here is a 350-residue protein sequence, read N- to C-terminus: MIRGFEAPMAENPPPPPPPVIFCHDSPKRVLVSVIRTTPIKPTCGGGGEPEPPPPLIPTSPGFSDFMVYPWRWGENAHNVTLSPGAAGAAASAALPAAAAAEHSGLRGRGAPPPAASASAAASGGEDEEEASSPDSGHLKDGIRRGRPRADTVRDLINEGEHSSSRIRCNICNRVFPREKSLQAHKRTHTGERPYLCDYPDCGKAFVQSGQLKTHQRLHTGEKPFVCSENGCLSRFTHANRHCPKHPYARLKREEPTDTLSKHQAADNKAAAEWLARYWEMREQRTPTLKGKLVQKADQEQQDPLEYLQSDEEDDEKRGAQRRLQEQRERLHGALALIELANLTGAPLRQ.

A disordered region spans residues 104–151 (SGLRGRGAPPPAASASAAASGGEDEEEASSPDSGHLKDGIRRGRPRAD). Positions 137 to 151 (GHLKDGIRRGRPRAD) are enriched in basic and acidic residues. 2 C2H2-type zinc fingers span residues 167 to 189 (IRCNICNRVFPREKSLQAHKRTH) and 195 to 219 (YLCDYPDCGKAFVQSGQLKTHQRLH). The segment at 290–327 (KGKLVQKADQEQQDPLEYLQSDEEDDEKRGAQRRLQEQ) is disordered. Residues 308-342 (LQSDEEDDEKRGAQRRLQEQRERLHGALALIELAN) adopt a coiled-coil conformation. Ser310 carries the phosphoserine modification. Basic and acidic residues predominate over residues 316 to 327 (EKRGAQRRLQEQ).

Belongs to the krueppel C2H2-type zinc-finger protein family.

The protein localises to the nucleus. Transcriptional activator. Isoform 1 may be involved in transcriptional activation of erythroid genes. The polypeptide is Zinc finger protein 367 (ZNF367) (Homo sapiens (Human)).